A 380-amino-acid polypeptide reads, in one-letter code: Glucose-1-phosphate adenylyltransferase (380 aa).

Residues Gly-164, 179 to 180 (EK), and Ser-190 contribute to the alpha-D-glucose 1-phosphate site.

The protein belongs to the bacterial/plant glucose-1-phosphate adenylyltransferase family. Homotetramer.

It catalyses the reaction alpha-D-glucose 1-phosphate + ATP + H(+) = ADP-alpha-D-glucose + diphosphate. The protein operates within glycan biosynthesis; glycogen biosynthesis. Functionally, involved in the biosynthesis of ADP-glucose, a building block required for the elongation reactions to produce glycogen. Catalyzes the reaction between ATP and alpha-D-glucose 1-phosphate (G1P) to produce pyrophosphate and ADP-Glc. The sequence is that of Glucose-1-phosphate adenylyltransferase from Streptococcus pneumoniae (strain CGSP14).